We begin with the raw amino-acid sequence, 153 residues long: Arachidonate 5-lipoxygenase-activating protein (153 aa).

The Lumenal segment spans residues 1–8 (MDQETVGN). Residues 9-30 (IVLLAIVTLISVVQNGFFAHKV) form a helical membrane-spanning segment. Topologically, residues 31–52 (EHESKTHNGRSFQRTGPLAFER) are cytoplasmic. The chain crosses the membrane as a helical span at residues 53–77 (VYTANQNCVDAYPTFLVMLWSAGLL). At 78-80 (CSQ) the chain is on the lumenal side. Residues 81–102 (VPAAFAGLMYLFVRQKYFVGYL) traverse the membrane as a helical segment. Over 103–107 (GERTQ) the chain is Cytoplasmic. The stretch at 108–115 (STPGYIFG) is an intramembrane region. Residues 116-128 (KRIILFLFAMSLA) traverse the membrane as a helical segment. At 129 to 153 (GILNYFLIAFFGSDFENYIKTVTTT) the chain is on the lumenal side.

Belongs to the MAPEG family. In terms of assembly, homotrimer. Interacts with LTC4S and ALOX5.

It is found in the nucleus membrane. The protein resides in the endoplasmic reticulum membrane. Required for leukotriene biosynthesis by ALOX5 (5-lipoxygenase). Anchors ALOX5 to the membrane. Binds arachidonic acid, and could play an essential role in the transfer of arachidonic acid to ALOX5. Binds to MK-886, a compound that blocks the biosynthesis of leukotrienes. The protein is Arachidonate 5-lipoxygenase-activating protein (ALOX5AP) of Ovis aries (Sheep).